We begin with the raw amino-acid sequence, 149 residues long: MADQLTEEQIAEFKEAFSLFDKDGDGTITTKELGTVMRSLGQNPTEAELQDMINEVDTDGNGTIDFPEFLTMMARKMKETDSEEEIREAFRVFDKDGNGFISAAELRHVMTNLGEKLTDEEVDEMIREADTDGDGQVNYEEFVGMMTSK.

An N-acetylalanine modification is found at alanine 2. EF-hand domains follow at residues 8–43 (EQIA…LGQN), 44–79 (PTEA…KMKE), 81–116 (DSEE…LGEK), and 117–149 (LTDE…MTSK). Ca(2+) contacts are provided by aspartate 21, aspartate 23, aspartate 25, threonine 27, glutamate 32, aspartate 57, aspartate 59, asparagine 61, threonine 63, glutamate 68, aspartate 94, aspartate 96, asparagine 98, and glutamate 105. Lysine 116 carries the N6,N6,N6-trimethyllysine modification. Residues aspartate 130, aspartate 132, aspartate 134, glutamine 136, and glutamate 141 each coordinate Ca(2+).

This sequence belongs to the calmodulin family.

Calmodulin mediates the control of a large number of enzymes, ion channels and other proteins by Ca(2+). Among the enzymes to be stimulated by the calmodulin-Ca(2+) complex are a number of protein kinases and phosphatases. The protein is Calmodulin of Suberites domuncula (Sponge).